A 1838-amino-acid chain; its full sequence is Lysine-specific demethylase 5 (1838 aa).

A disordered region spans residues 1–150 (MSAKTEADNT…SSNKFDQGKN (150 aa)). Positions 15–31 (SGGGGVGSGTSSGGGAS) are enriched in gly residues. Residues 45-56 (RNSTGNGTNSGS) are compositionally biased toward low complexity. Over residues 136–145 (HTQPHSSNKF) the composition is skewed to polar residues. Positions 161–202 (CPVFRPTTEEFKNPLAYISKIRSIAEKCGIAKILPPATWSPP) constitute a JmjN domain. One can recognise an ARID domain in the interval 226–316 (TRVKLNFLDQ…ILHPFEVYTS (91 aa)). Over residues 321–333 (GPTPTSSGSGSTP) the composition is skewed to low complexity. Disordered stretches follow at residues 321–380 (GPTP…GLSG) and 416–437 (GSPL…KGGE). Thr323 is subject to Phosphothreonine. 3 stretches are compositionally biased toward polar residues: residues 351 to 361 (TRQQIAPPNET), 369 to 380 (FGNSNASCGLSG), and 416 to 430 (GSPL…TRGA). The PHD-type 1 zinc finger occupies 448 to 498 (KYICHICNRGDVEESMLLCDGCDDSYHTFCLLPPLTSIPKGEWLCPRCVVE). The JmjC domain maps to 591–757 (EYAESSWNLN…MGRECVNHYS (167 aa)). The Fe cation site is built by His637, Asp640, and His725. Residues 960–1049 (VRTRSDHNQE…LRIELQQLDL (90 aa)) are a coiled coil. The PHD-type 2 zinc finger occupies 1293–1354 (DMFCLCKSEF…KWLCPSCVRS (62 aa)). The interval 1401 to 1462 (SSPDVSAAQE…SDADDDDDED (62 aa)) is disordered. The segment covering 1407-1417 (AAQEAIMAQQQ) has biased composition (low complexity). Phosphoserine is present on residues Ser1422 and Ser1433. A compositionally biased stretch (acidic residues) spans 1453 to 1462 (SDADDDDDED). Ser1474 bears the Phosphoserine mark. The disordered stretch occupies residues 1548–1751 (YMQRQRQQHT…QRSQQAAQED (204 aa)). 5 stretches are compositionally biased toward low complexity: residues 1576–1595 (NSPN…SNSG), 1624–1650 (GKKG…PGAD), 1658–1667 (ANGGNTNSST), 1674–1683 (SATTTPTPGS), and 1692–1736 (STTA…ATGG). Phosphoserine occurs at positions 1635 and 1640. The segment at 1753–1808 (EEECRAENCHKPTGREVDWVQCDGGCNEWFHMYCVGLNRSQIKPDDDYICIRCTKT) adopts a PHD-type 3 zinc-finger fold. Residues 1814-1838 (QGSGHSMSVASTTTPGKQRAVQSAR) are disordered.

Belongs to the JARID1 histone demethylase family. Interacts with Myc. Part of a complex containing Lid, Myc and Ash2. Fe(2+) is required as a cofactor.

Its subcellular location is the nucleus. It carries out the reaction N(6),N(6),N(6)-trimethyl-L-lysyl(4)-[histone H3] + 3 2-oxoglutarate + 3 O2 = L-lysyl(4)-[histone H3] + 3 formaldehyde + 3 succinate + 3 CO2. Its activity is regulated as follows. Inhibited by Myc. Histone demethylase that specifically demethylates 'Lys-4' of histone H3, thereby playing a central role in histone code. Does not demethylate histone H3 'Lys-9', H3 'Lys-27', H3 'Lys-36', H3 'Lys-79' or H4 'Lys-20'. Specifically demethylates trimethylated H3 'Lys-4'. Required for the correct regulation of homeotic genes during development. Plays a role in the regulation of the circadian rhythm and in maintaining the normal periodicity of the circadian clock. Regulates the expression of clock-controlled genes including tim, per and cry. This chain is Lysine-specific demethylase 5, found in Drosophila melanogaster (Fruit fly).